The primary structure comprises 203 residues: Ras-related protein Rab-18 (203 aa).

GTP is bound by residues Ser-20, Gly-23, Lys-24, Ser-25, Ser-26, Asp-37, Pro-38, Thr-43, Gly-69, Lys-126, Asp-128, and Ala-155. The Effector region motif lies at 40-48 (QAATIGVDF). Residues Cys-201 and Cys-203 are each lipidated (S-geranylgeranyl cysteine). A Cysteine methyl ester modification is found at Cys-203.

This sequence belongs to the small GTPase superfamily. Rab family.

It catalyses the reaction GTP + H2O = GDP + phosphate + H(+). In terms of biological role, the small GTPases Rab are key regulators of intracellular membrane trafficking, from the formation of transport vesicles to their fusion with membranes. Rabs cycle between an inactive GDP-bound form and an active GTP-bound form that is able to recruit to membranes different sets of downstream effectors directly responsible for vesicle formation, movement, tethering and fusion. Plays a role in apical endocytosis/recycling. May be implicated in transport between the plasma membrane and early endosomes. Plays a role in the shedding of pathogen spores from intestinal cells. The chain is Ras-related protein Rab-18 (rab-18) from Caenorhabditis elegans.